Reading from the N-terminus, the 250-residue chain is 23S rRNA (guanosine-2'-O-)-methyltransferase RlmB (250 aa).

Residues glycine 198, isoleucine 218, and leucine 227 each coordinate S-adenosyl-L-methionine.

Belongs to the class IV-like SAM-binding methyltransferase superfamily. RNA methyltransferase TrmH family. RlmB subfamily.

The protein resides in the cytoplasm. It catalyses the reaction guanosine(2251) in 23S rRNA + S-adenosyl-L-methionine = 2'-O-methylguanosine(2251) in 23S rRNA + S-adenosyl-L-homocysteine + H(+). Specifically methylates the ribose of guanosine 2251 in 23S rRNA. The protein is 23S rRNA (guanosine-2'-O-)-methyltransferase RlmB of Coxiella burnetii (strain RSA 493 / Nine Mile phase I).